Consider the following 347-residue polypeptide: NADH-ubiquinone oxidoreductase chain 2 (347 aa).

11 helical membrane-spanning segments follow: residues 3–23, 25–45, 59–79, 96–116, 127–147, 149–169, 178–198, 201–221, 239–259, 274–294, and 326–346; these read PMTF…VLLS, HWFM…PVLM, YFLT…INTM, ILIT…FWVP, GLIL…QIYP, LNTN…GWGG, IMAY…TYNP, SLLN…LLII, IVTT…PLTG, NSLI…FFYM, and TAPL…LITL.

The protein belongs to the complex I subunit 2 family. As to quaternary structure, core subunit of respiratory chain NADH dehydrogenase (Complex I) which is composed of 45 different subunits. Interacts with TMEM242.

The protein resides in the mitochondrion inner membrane. The enzyme catalyses a ubiquinone + NADH + 5 H(+)(in) = a ubiquinol + NAD(+) + 4 H(+)(out). Its function is as follows. Core subunit of the mitochondrial membrane respiratory chain NADH dehydrogenase (Complex I) which catalyzes electron transfer from NADH through the respiratory chain, using ubiquinone as an electron acceptor. Essential for the catalytic activity and assembly of complex I. The sequence is that of NADH-ubiquinone oxidoreductase chain 2 from Sylvisorex ollula (Greater forest shrew).